A 273-amino-acid chain; its full sequence is Large ribosomal subunit protein uL2 (273 aa).

Positions 221–263 are disordered; that stretch reads RGTAMNPVDHPHGGGEGRNFGKHPVTPWGVQTKGKKTRHNKRT. Residues 253 to 263 are compositionally biased toward basic residues; it reads KGKKTRHNKRT.

The protein belongs to the universal ribosomal protein uL2 family. In terms of assembly, part of the 50S ribosomal subunit. Forms a bridge to the 30S subunit in the 70S ribosome.

Its function is as follows. One of the primary rRNA binding proteins. Required for association of the 30S and 50S subunits to form the 70S ribosome, for tRNA binding and peptide bond formation. It has been suggested to have peptidyltransferase activity; this is somewhat controversial. Makes several contacts with the 16S rRNA in the 70S ribosome. This is Large ribosomal subunit protein uL2 from Histophilus somni (strain 129Pt) (Haemophilus somnus).